A 624-amino-acid polypeptide reads, in one-letter code: LRR receptor kinase BAK1 (624 aa).

Residues 1-25 (MAAHRWAVWAVLLLRLLVPAARVLA) form the signal peptide. Residues 26–237 (NMEGDALHSL…QSPGSSSSTG (212 aa)) are Extracellular-facing. LRR repeat units follow at residues 91–115 (LKNL…LGNL), 117–139 (NLVS…LGNL), 140–163 (LKLR…LTAI), and 164–188 (TALQ…SFSL). N-linked (GlcNAc...) asparagine glycosylation is found at N103, N114, N127, N149, and N175. The disordered stretch occupies residues 205 to 236 (TTKPCPGAPPFSPPPPYNPPTPVQSPGSSSST). Over residues 210-227 (PGAPPFSPPPPYNPPTPV) the composition is skewed to pro residues. A helical transmembrane segment spans residues 238 to 258 (AIAGGVAAGAALLFAIPAIGF). The Cytoplasmic portion of the chain corresponds to 259–624 (AWYRRRKPQE…LHAVELSGPR (366 aa)). In terms of domain architecture, Protein kinase spans 301–588 (FSNKNILGRG…GLAERWEEWQ (288 aa)). Residues 307-315 (LGRGGFGKV) and K329 contribute to the ATP site. Catalysis depends on D428, which acts as the Proton acceptor.

This sequence belongs to the protein kinase superfamily. Ser/Thr protein kinase family. Forms homodimers. Interacts with BRI1. Interacts with REM4.1. Expressed in developing lateral roots, shoot apex, leaf blades, lamina joints and flowers. Expressed at low levels in leaf sheaths and panicles.

It is found in the cell membrane. It carries out the reaction L-seryl-[protein] + ATP = O-phospho-L-seryl-[protein] + ADP + H(+). The enzyme catalyses L-threonyl-[protein] + ATP = O-phospho-L-threonyl-[protein] + ADP + H(+). In terms of biological role, LRR receptor kinase involved in defense response. Does not seem to be required specifically for XA21-mediated immunity or basal resistance to Xanthomonas oryzae pv. oryzae (Xoo), or immunity to Magnaporthe oryzae. Involved in brassinosteroid (BR) signaling pathway. Acts as a coreceptor of BRI1. Forms at the plasma membrane a receptor complex with BRI1 which is activated in response to brassinolide. Phosphorylates BRI1. Required for normal plant growth and leaf development. Possesses kinase activity in vitro. This Oryza sativa subsp. japonica (Rice) protein is LRR receptor kinase BAK1.